A 346-amino-acid polypeptide reads, in one-letter code: Phosphoribosylformylglycinamidine cyclo-ligase (346 aa).

Belongs to the AIR synthase family.

It localises to the cytoplasm. It catalyses the reaction 2-formamido-N(1)-(5-O-phospho-beta-D-ribosyl)acetamidine + ATP = 5-amino-1-(5-phospho-beta-D-ribosyl)imidazole + ADP + phosphate + H(+). Its pathway is purine metabolism; IMP biosynthesis via de novo pathway; 5-amino-1-(5-phospho-D-ribosyl)imidazole from N(2)-formyl-N(1)-(5-phospho-D-ribosyl)glycinamide: step 2/2. This chain is Phosphoribosylformylglycinamidine cyclo-ligase, found in Polaromonas sp. (strain JS666 / ATCC BAA-500).